The primary structure comprises 359 residues: Mitochondrial glutathione transporter SLC25A39 (359 aa).

Topologically, residues 1-18 (MGDRPAVRISAAITPVQQ) are mitochondrial intermembrane. 3 Solcar repeats span residues 13–149 (ITPV…LRDF), 157–241 (HGDH…VKAQ), and 251–346 (ASFT…GKTF). Residues 19–39 (MLASGTGAVLTSLFVTPLDVV) traverse the membrane as a helical segment. Residues 40 to 119 (KIRLQAQQTP…VKITHNEGLR (80 aa)) lie on the Mitochondrial matrix side of the membrane. Positions 72, 76, 86, and 92 each coordinate [2Fe-2S] cluster. A helical membrane pass occupies residues 120–140 (SLWSGLPPTLVMAVPATVIYF). At 141 to 162 (TCYDQLRDFLCYSMGYHGDHIP) the chain is on the mitochondrial intermembrane side. A helical transmembrane segment spans residues 163 to 183 (LIAGGLARLGAVSVISPLELV). The Mitochondrial matrix portion of the chain corresponds to 184-212 (RTKMQSRRLQYSELMVCIRSSVAQDGWLS). A helical transmembrane segment spans residues 213-233 (LWRGWGPTVLRDVPFSALYWF). Topologically, residues 234–253 (NYELVKAQLCEHYRTPQASF) are mitochondrial intermembrane. Residues 254–274 (TISFTAGAVSGAIAAVLTLPF) traverse the membrane as a helical segment. Residues 275–316 (DVVKTRRQIQLGEMEALGAVSMKKPSSTWNMMRNIWIDMGYK) are Mitochondrial matrix-facing. Residues 317-337 (GLFAGFLPRVIKVAPACAVMI) traverse the membrane as a helical segment. The Mitochondrial intermembrane portion of the chain corresponds to 338–359 (STYEFGKTFFQERNLHQARCGL).

It belongs to the mitochondrial carrier (TC 2.A.29) family. In terms of processing, cleaved and degraded by AFG3L2; degradation by AFG3L2 is regulated by the ability of SLC25A39 to bind iron-sulfur. In absence of mitochondrial glutathione, SLC25A39 binds iron-sulfur, preventing cleavage and degradation by AFG3L2. The presence of mitochondrial glutathione prevents iron-sulfur-binding to SLC25A39, promoting cleavage and degradation by AFG3L2.

The protein localises to the mitochondrion inner membrane. The enzyme catalyses glutathione(in) = glutathione(out). With respect to regulation, the activity of SLC25A39 is regulated by levels of mitochondrial glutathione via its ability to bind [2Fe-2S] iron-sulfur cluster. Upon physiological levels of mitochondrial glutathione, glutathione prevents iron-sulfur-binding to SLC25A39 promoting cleavage and degradation by AFG3L2. Upon depletion of mitochondrial glutathione, SLC25A39 binds iron-sulfur, preventing cleavage and degradation by AFG3L2. Its function is as follows. Mitochondrial transporter required for glutathione import into mitochondria. Glutathione, which plays key roles in oxidative metabolism, is produced exclusively in the cytosol and is imported in many organelles. Mitochondrial glutathione is required for the activity and stability of proteins containing iron-sulfur clusters, as well as erythropoiesis. Involved in the early steps of heme biosynthesis. This Danio rerio (Zebrafish) protein is Mitochondrial glutathione transporter SLC25A39 (slc25a39).